A 963-amino-acid chain; its full sequence is Protein suppressor of white apricot (963 aa).

The stretch at 234–276 is one SURP motif 1 repeat; the sequence is IIEKTARFIATQGAQMEILIKAKQANNTQFDFLTQGGHLQPYY. Disordered regions lie at residues 290 to 322 and 360 to 430; these read PAPQTPLDQQNTDKEAPSADDHSEEVAGGRRNP and EDES…EPPQ. Over residues 300–317 the composition is skewed to basic and acidic residues; sequence NTDKEAPSADDHSEEVAG. Polar residues predominate over residues 364 to 375; sequence SNPGNSQHSGGT. Residues 407-418 show a composition bias toward basic and acidic residues; sequence THEEESSNREQQ. Phosphoserine is present on residues serine 438, serine 447, serine 448, and serine 450. Positions 445–470 are disordered; it reads NYSSESEEEEDQVQPEKEEEKKPEPV. A compositionally biased stretch (basic and acidic residues) spans 458 to 468; the sequence is QPEKEEEKKPE. One copy of the SURP motif 2 repeat lies at 483-523; the sequence is IIDKTATYVIKNGRQFEETLRTKSVDRFSFLLPANEYYPYY. Disordered regions lie at residues 593 to 613, 634 to 662, and 716 to 963; these read PQEASDEETSSNAAGVEHVRP, TAGQKGNITASPSCSSPQKEQRQAEERVK, and PPES…SSSP. Polar residues predominate over residues 637-651; sequence QKGNITASPSCSSPQ. A Phosphoserine modification is found at serine 649. Positions 652 to 662 are enriched in basic and acidic residues; that stretch reads KEQRQAEERVK. The segment covering 718–727 has biased composition (low complexity); that stretch reads ESAAGAATAD. The span at 768 to 778 shows a compositional bias: acidic residues; the sequence is DEEDDDEEDGG. The span at 787–796 shows a compositional bias: polar residues; it reads NDDSTNTFTS. Pro residues predominate over residues 799 to 809; that stretch reads VLPPTAAPPPA. The span at 820–830 shows a compositional bias: low complexity; sequence QLVATTSTRSS. The segment covering 831 to 847 has biased composition (basic residues); the sequence is SSRHLKTHRRSRSRSKN. A compositionally biased stretch (low complexity) spans 848-858; the sequence is VRSSDSSPSSR. Composition is skewed to basic residues over residues 861-870 and 882-913; these read SRRRRQKSSR and KSQHSSTQRKKTPKKRRRSKSRSRSKSIRRSR. Phosphoserine occurs at positions 912, 914, and 916. The span at 934-944 shows a compositional bias: basic and acidic residues; the sequence is AEQRRQQDRRR. Basic residues predominate over residues 945–963; sequence TPTKKSHKRHKRRRRSSSP.

The protein localises to the nucleus speckle. Functionally, regulator of pre-mRNA splicing (and, possibly, of other RNA processing events). Regulates its own expression at the level of RNA processing. The chain is Protein suppressor of white apricot (su(w[a])) from Drosophila melanogaster (Fruit fly).